Consider the following 484-residue polypeptide: Fumarate hydratase class II (484 aa).

A disordered region spans residues 1 to 22 (MPSILDLPIGTGATGKRKESDS). Substrate is bound by residues 110-112 (SGT), 141-144 (HPND), 151-153 (SSN), and Thr199. Residue His200 is the Proton donor/acceptor of the active site. Ser330 is an active-site residue. Residues Ser331 and 336–338 (KVN) contribute to the substrate site.

It belongs to the class-II fumarase/aspartase family. Fumarase subfamily. In terms of assembly, homotetramer.

It is found in the cytoplasm. The enzyme catalyses (S)-malate = fumarate + H2O. The protein operates within carbohydrate metabolism; tricarboxylic acid cycle; (S)-malate from fumarate: step 1/1. Functionally, involved in the TCA cycle. Catalyzes the stereospecific interconversion of fumarate to L-malate. This Methanosarcina acetivorans (strain ATCC 35395 / DSM 2834 / JCM 12185 / C2A) protein is Fumarate hydratase class II.